The primary structure comprises 125 residues: Small ribosomal subunit protein uS13 (125 aa).

The segment at 93-125 (RKGLPVRGQRTKTNARTRKGPKRTVAGKKKAGR) is disordered.

This sequence belongs to the universal ribosomal protein uS13 family. As to quaternary structure, part of the 30S ribosomal subunit. Forms a loose heterodimer with protein S19. Forms two bridges to the 50S subunit in the 70S ribosome.

In terms of biological role, located at the top of the head of the 30S subunit, it contacts several helices of the 16S rRNA. In the 70S ribosome it contacts the 23S rRNA (bridge B1a) and protein L5 of the 50S subunit (bridge B1b), connecting the 2 subunits; these bridges are implicated in subunit movement. Contacts the tRNAs in the A and P-sites. The chain is Small ribosomal subunit protein uS13 from Arthrobacter sp. (strain FB24).